We begin with the raw amino-acid sequence, 61 residues long: Large ribosomal subunit protein uL30 (61 aa).

It belongs to the universal ribosomal protein uL30 family. Part of the 50S ribosomal subunit.

The sequence is that of Large ribosomal subunit protein uL30 from Neisseria meningitidis serogroup C (strain 053442).